The primary structure comprises 335 residues: 2-acylglycerol O-acyltransferase 2-A (335 aa).

2 consecutive transmembrane segments (helical) span residues 24 to 44 (WVFSFLALAQTCILLFFVLLF) and 47 to 67 (FWIISVVYGVWWFLDWDTPSK).

This sequence belongs to the diacylglycerol acyltransferase family.

It localises to the endoplasmic reticulum membrane. It is found in the cytoplasm. The protein localises to the perinuclear region. The catalysed reaction is a 2-acylglycerol + an acyl-CoA = a 1,2-diacylglycerol + CoA. It carries out the reaction a 2-acylglycerol + an acyl-CoA = a 1,2-diacyl-sn-glycerol + CoA. It catalyses the reaction a 2-acylglycerol + an acyl-CoA = a 2,3-diacyl-sn-glycerol + CoA. The enzyme catalyses a 1-acylglycerol + an acyl-CoA = a 1,2-diacylglycerol + CoA. The catalysed reaction is a 1-acylglycerol + an acyl-CoA = a 1,3-diacylglycerol + CoA. It carries out the reaction 1-O-alkylglycerol + an acyl-CoA = 1-O-alkyl-3-acylglycerol + CoA. It catalyses the reaction an acyl-CoA + a 1,2-diacyl-sn-glycerol = a triacyl-sn-glycerol + CoA. It functions in the pathway glycerolipid metabolism; triacylglycerol biosynthesis. Its function is as follows. Catalyzes the formation of diacylglycerol from 2-monoacylglycerol and fatty acyl-CoA. Involved in glycerolipid synthesis and lipid metabolism. Catalyzes the formation of diacylglycerol, the precursor of triacylglycerol, by transferring the acyl chain of a fatty acyl-CoA to a monoacylglycerol. Plays a central role in absorption of dietary fat in the small intestine by catalyzing the resynthesis of triacylglycerol in enterocytes. Has a preference toward monoacylglycerols containing unsaturated fatty acids in an order of C18:3 &gt; C18:2 &gt; C18:1 &gt; C18:0 at sn-2. Able to use 1-monoalkylglycerol (1-MAkG, 1-O-alkylglycerol) as an acyl acceptor for the synthesis of monoalkyl-monoacylglycerol (MAMAG, 1-O-alkyl-3-acylglycerol or 1-O-alkyl-2-acylglycerol) and subsequently, with lower efficiency, may add another acyl chain producing monoalkyl-diacylglycerol (MADAG, 1-O-alkyl-2,3-diacylglycerol). Possesses weak but significant activity with diacylglycerol as substrate, producing triacylglycerol (triacyl-sn-glycerol). The polypeptide is 2-acylglycerol O-acyltransferase 2-A (mogat2-a) (Xenopus laevis (African clawed frog)).